Consider the following 856-residue polypeptide: Bifunctional uridylyltransferase/uridylyl-removing enzyme (856 aa).

The uridylyltransferase stretch occupies residues 1 to 320 (MTLSAAPLQH…YCQVPRVTQH (320 aa)). A uridylyl-removing region spans residues 321–678 (ISEYFHAVNG…ARLADDHEGL (358 aa)). Positions 439 to 561 (VDEHILMVVR…VRTPRRLAAL (123 aa)) constitute an HD domain. ACT domains follow at residues 679-760 (QVLI…LPPQ) and 788-856 (ILSI…ALRI).

It belongs to the GlnD family. Mg(2+) serves as cofactor.

It catalyses the reaction [protein-PII]-L-tyrosine + UTP = [protein-PII]-uridylyl-L-tyrosine + diphosphate. The catalysed reaction is [protein-PII]-uridylyl-L-tyrosine + H2O = [protein-PII]-L-tyrosine + UMP + H(+). With respect to regulation, uridylyltransferase (UTase) activity is inhibited by glutamine, while glutamine activates uridylyl-removing (UR) activity. In terms of biological role, modifies, by uridylylation and deuridylylation, the PII regulatory proteins (GlnB and homologs), in response to the nitrogen status of the cell that GlnD senses through the glutamine level. Under low glutamine levels, catalyzes the conversion of the PII proteins and UTP to PII-UMP and PPi, while under higher glutamine levels, GlnD hydrolyzes PII-UMP to PII and UMP (deuridylylation). Thus, controls uridylylation state and activity of the PII proteins, and plays an important role in the regulation of nitrogen assimilation and metabolism. This Chromobacterium violaceum (strain ATCC 12472 / DSM 30191 / JCM 1249 / CCUG 213 / NBRC 12614 / NCIMB 9131 / NCTC 9757 / MK) protein is Bifunctional uridylyltransferase/uridylyl-removing enzyme.